We begin with the raw amino-acid sequence, 369 residues long: Probable dual-specificity RNA methyltransferase RlmN (369 aa).

The active-site Proton acceptor is E108. Residues 114-351 (YPDRATLCIS…IAQGVSCTVR (238 aa)) form the Radical SAM core domain. A disulfide bridge connects residues C121 and C362. Positions 128, 132, and 135 each coordinate [4Fe-4S] cluster. S-adenosyl-L-methionine contacts are provided by residues 183 to 184 (GE), S217, 240 to 242 (SLH), and N319. The S-methylcysteine intermediate role is filled by C362.

The protein belongs to the radical SAM superfamily. RlmN family. The cofactor is [4Fe-4S] cluster.

It is found in the cytoplasm. It carries out the reaction adenosine(2503) in 23S rRNA + 2 reduced [2Fe-2S]-[ferredoxin] + 2 S-adenosyl-L-methionine = 2-methyladenosine(2503) in 23S rRNA + 5'-deoxyadenosine + L-methionine + 2 oxidized [2Fe-2S]-[ferredoxin] + S-adenosyl-L-homocysteine. The catalysed reaction is adenosine(37) in tRNA + 2 reduced [2Fe-2S]-[ferredoxin] + 2 S-adenosyl-L-methionine = 2-methyladenosine(37) in tRNA + 5'-deoxyadenosine + L-methionine + 2 oxidized [2Fe-2S]-[ferredoxin] + S-adenosyl-L-homocysteine. Its function is as follows. Specifically methylates position 2 of adenine 2503 in 23S rRNA and position 2 of adenine 37 in tRNAs. The sequence is that of Probable dual-specificity RNA methyltransferase RlmN from Rhodococcus erythropolis (strain PR4 / NBRC 100887).